Reading from the N-terminus, the 611-residue chain is DNA mismatch repair protein MutL (611 aa).

The tract at residues 364–384 (NVNSKPSKYRPATSPTVPKYT) is disordered.

Belongs to the DNA mismatch repair MutL/HexB family.

Functionally, this protein is involved in the repair of mismatches in DNA. It is required for dam-dependent methyl-directed DNA mismatch repair. May act as a 'molecular matchmaker', a protein that promotes the formation of a stable complex between two or more DNA-binding proteins in an ATP-dependent manner without itself being part of a final effector complex. The polypeptide is DNA mismatch repair protein MutL (Rickettsia bellii (strain OSU 85-389)).